The following is a 196-amino-acid chain: Mitochondrial intermembrane space cysteine motif-containing protein MIX23 (196 aa).

The short motif at 99 to 114 is the Cx14C motif element; the sequence is CEKEAAEMKNETDQQC. A Cx13C motif motif is present at residues 178–192; that stretch reads CEQNNDYLKEFTQFC.

It belongs to the MIX23 family.

The protein localises to the mitochondrion intermembrane space. In terms of biological role, regulator of the mitochondrial protein import machinery that is localized in the mitochondrial intermembrane space (IMS) and facilitates the transport of proteins from the cytosol into the mitochondrial matrix. Not essential for mitochondrial protein import but induced and required when mitochondrial import is compromised. Stimulates or stabilizes the translocation into the mitochondria of proteins such as OXA1, ATP1 and COX12. This Saccharomyces cerevisiae (strain ATCC 204508 / S288c) (Baker's yeast) protein is Mitochondrial intermembrane space cysteine motif-containing protein MIX23.